A 579-amino-acid polypeptide reads, in one-letter code: Laccase (579 aa).

Positions 1 to 31 (MTDWSRRRFLQTGAALGIAGTLPQTTTEVSA) form a signal peptide, tat-type signal. The region spanning 82 to 214 (WGFDGSYPGP…AGLLGLYSIT (133 aa)) is the Plastocyanin-like 1 domain. The Cu cation site is built by His145, His147, His192, and His194. The segment at 372–401 (VSDPSTPPEDASADPTSLSLPTPASYDESD) is disordered. The region spanning 423–530 (LNGHVFGDED…NKMMIPFVVE (108 aa)) is the Plastocyanin-like 2 domain. An N-linked (GlcNAc...) asparagine glycan is attached at Asn449. Cu cation contacts are provided by His455, His458, His460, His512, Cys513, His514, His518, and Met523. The N-linked (GlcNAc...) asparagine glycan is linked to Asn557.

This sequence belongs to the multicopper oxidase family. It depends on Cu(2+) as a cofactor. In terms of processing, exported by the Tat system. Post-translationally, glycosylated.

It is found in the secreted. The enzyme catalyses 4 hydroquinone + O2 = 4 benzosemiquinone + 2 H2O. With respect to regulation, inhibited by 1 mM NaN(3), 10 mM thiourea, 10 mM 1,10-phenanthroline, 0.1 mM DL-dithiothreitol (DTT) and 1 mM L-cysteine. The inhibition by DTT and L-cysteine is likely caused by reduction of the oxidized substrate and not by inhibition of the enzyme. Its function is as follows. Catalyzes the oxidation of a wide variety of organic substrates, including bilirubin, syringaldazine (SGZ), 2,2'-azino-di-(3-ethylbenzothiazoline)-6-sulfonic acid (ABTS) and dimethoxyphenol (DMP). No oxidation of Fe(2+) or guaiacol. In Haloferax volcanii (strain ATCC 29605 / DSM 3757 / JCM 8879 / NBRC 14742 / NCIMB 2012 / VKM B-1768 / DS2) (Halobacterium volcanii), this protein is Laccase (lccA).